Consider the following 203-residue polypeptide: Molybdenum cofactor guanylyltransferase (203 aa).

GTP is bound by residues Leu12–Gly14, Lys25, Asn53, Asp71, and Asp101. Asp101 lines the Mg(2+) pocket.

It belongs to the MobA family. As to quaternary structure, monomer. Requires Mg(2+) as cofactor.

It localises to the cytoplasm. It carries out the reaction Mo-molybdopterin + GTP + H(+) = Mo-molybdopterin guanine dinucleotide + diphosphate. Transfers a GMP moiety from GTP to Mo-molybdopterin (Mo-MPT) cofactor (Moco or molybdenum cofactor) to form Mo-molybdopterin guanine dinucleotide (Mo-MGD) cofactor. The sequence is that of Molybdenum cofactor guanylyltransferase from Methylibium petroleiphilum (strain ATCC BAA-1232 / LMG 22953 / PM1).